The sequence spans 402 residues: Phosphoglycerate kinase (402 aa).

Substrate contacts are provided by residues 24–26, Arg40, 63–66, Arg122, and Arg155; these read DFN and HFGR. Residues Lys206, Gly297, Glu328, and 357-360 each bind ATP; that span reads GGDS.

This sequence belongs to the phosphoglycerate kinase family. In terms of assembly, monomer.

It localises to the cytoplasm. It catalyses the reaction (2R)-3-phosphoglycerate + ATP = (2R)-3-phospho-glyceroyl phosphate + ADP. Its pathway is carbohydrate degradation; glycolysis; pyruvate from D-glyceraldehyde 3-phosphate: step 2/5. The polypeptide is Phosphoglycerate kinase (Synechococcus elongatus (strain ATCC 33912 / PCC 7942 / FACHB-805) (Anacystis nidulans R2)).